A 718-amino-acid polypeptide reads, in one-letter code: Sodium/myo-inositol cotransporter (718 aa).

Over 1-9 (MRAVLEAAD) the chain is Extracellular. Residues 10-29 (IAVVALYFILVMCIGFFAMW) traverse the membrane as a helical segment. Residues 30-38 (KSNRSTVSG) are Cytoplasmic-facing. The helical transmembrane segment at 39 to 57 (YFLAGRSMTWVAIGASLFV) threads the bilayer. The Extracellular portion of the chain corresponds to 58–86 (SNIGSEHFIGLAGSGAASGFAVGAWEFNA). A helical membrane pass occupies residues 87–110 (LLLLQLLGWVFIPIYIRSGVYTMP). Over 111–123 (EYLSKRFGGHRIQ) the chain is Cytoplasmic. Residues 124 to 144 (VYFAALSLLLYIFTKLSVDLY) traverse the membrane as a helical segment. At 145-157 (SGALFIQESLGWN) the chain is on the extracellular side. The helical transmembrane segment at 158–183 (LYVSVILLIGMTALLTVTGGLVAVIY) threads the bilayer. The Cytoplasmic portion of the chain corresponds to 184–186 (TDT). Residues 187-205 (LQALLMIIGALTLMVISMV) form a helical membrane-spanning segment. Residues 206–303 (KIGGFEEVKR…HAKGSTLMAG (98 aa)) lie on the Extracellular side of the membrane. A glycan (N-linked (GlcNAc...) asparagine) is linked at asparagine 232. Residues 304–324 (FLKLLPMFIIVVPGMISRIVF) traverse the membrane as a helical segment. Residues 325 to 353 (ADEIACINPEHCMQVCGSRAGCSNIAYPR) lie on the Cytoplasmic side of the membrane. Residues 354–376 (LVMTLVPVGLRGLMMAVMIAALM) traverse the membrane as a helical segment. Over 377–406 (SDLDSIFNSASTIFTLDVYKLIRKSASSRE) the chain is Extracellular. The chain crosses the membrane as a helical span at residues 407 to 430 (LMIVGRIFVAFMVVISIAWVPIIV). Residues 431–443 (EMQGGQMYLYIQE) are Cytoplasmic-facing. Residues 444–462 (VADYLTPPVAALFLLAIFW) traverse the membrane as a helical segment. The Extracellular portion of the chain corresponds to 463–510 (KRCNEQGAFYGGMAGFVLGAVRLILAFTYRAPECDQPDNRPGFIKDIH). A helical membrane pass occupies residues 511 to 532 (YMYVATALFWITGLITVIVSLL). Residues 533–695 (TPPPTKDQIR…QMLEETPQVK (163 aa)) lie on the Cytoplasmic side of the membrane. Residues serine 594 and serine 632 each carry the phosphoserine modification. The chain crosses the membrane as a helical span at residues 696–716 (VILNIGLFAVCSLGIFMFVYF). The Extracellular segment spans residues 717 to 718 (SL).

This sequence belongs to the sodium:solute symporter (SSF) (TC 2.A.21) family. Interacts with KCNQ2 (via the pore module). Interacts with KCNQ1; this interaction is direct. Forms coregulatory complexes with ion channels KCNQ2-KCNQ3 and KCNQ1-KCNE2. As to expression, highly expressed in kidney, placenta, and brain and at a lesser extent in thymus, lung, bladder, and testes. Expressed in the choroid plexus epithelium (at protein level).

The protein resides in the apical cell membrane. It localises to the basolateral cell membrane. The enzyme catalyses myo-inositol(out) + 2 Na(+)(out) = myo-inositol(in) + 2 Na(+)(in). The catalysed reaction is scyllo-inositol(out) + 2 Na(+)(out) = scyllo-inositol(in) + 2 Na(+)(in). Functionally, electrogenic Na(+)-coupled sugar symporter that actively transports myo-inositol and its stereoisomer scyllo-inositol across the plasma membrane, with a Na(+) to sugar coupling ratio of 2:1. Maintains myo-inositol concentration gradient that defines cell volume and fluid balance during osmotic stress, in particular in the fetoplacental unit and central nervous system. Forms coregulatory complexes with voltage-gated K(+) ion channels, allosterically altering ion selectivity, voltage dependence and gating kinetics of the channel. In turn, K(+) efflux through the channel forms a local electrical gradient that modulates electrogenic Na(+)-coupled myo-inositol influx through the transporter. Associates with KCNQ1-KCNE2 channel in the apical membrane of choroid plexus epithelium and regulates the myo-inositol gradient between blood and cerebrospinal fluid with an impact on neuron excitability. Associates with KCNQ2-KCNQ3 channel altering ion selectivity, increasing Na(+) and Cs(+) permeation relative to K(+) permeation. Provides myo-inositol precursor for biosynthesis of phosphoinositides such as PI(4,5)P2, thus indirectly affecting the activity of phosphoinositide-dependent ion channels and Ca(2+) signaling upon osmotic stress. In terms of biological role, (Microbial infection) Functions as a retroviral receptor for M813 murine leukemia virus (MuLV) entry. This chain is Sodium/myo-inositol cotransporter (Slc5a3), found in Mus musculus (Mouse).